We begin with the raw amino-acid sequence, 146 residues long: Hemoglobin subunit beta (146 aa).

Residue Val-1 is modified to N-acetylvaline. The Globin domain occupies 2–146; sequence HLTGEEKAAV…VANALAHKYH (145 aa). Thr-12 bears the Phosphothreonine mark. A Phosphoserine modification is found at Ser-44. Lys-59 is subject to N6-acetyllysine. A heme b-binding site is contributed by His-63. Position 82 is an N6-acetyllysine (Lys-82). His-92 serves as a coordination point for heme b. Cys-93 is modified (S-nitrosocysteine). Lys-144 carries the post-translational modification N6-acetyllysine.

This sequence belongs to the globin family. In terms of assembly, heterotetramer of two alpha chains and two beta chains. Red blood cells.

Functionally, involved in oxygen transport from the lung to the various peripheral tissues. The chain is Hemoglobin subunit beta (HBB) from Lutra lutra (European river otter).